The following is a 375-amino-acid chain: Trichodiene synthase (375 aa).

The protein belongs to the trichodiene synthase family.

It catalyses the reaction (2E,6E)-farnesyl diphosphate = trichodiene + diphosphate. The protein operates within sesquiterpene biosynthesis; trichothecene biosynthesis. TS is a member of the terpene cyclase group of enzymes. It catalyzes the isomerization and cyclization of farnesyl pyro-phosphate to form trichodiene, the first cyclic intermediate in the biosynthetic pathway for trichothecenes. It serves to branch trichothecene biosynthesis from the isoprenoid pathway. The chain is Trichodiene synthase (TRI5) from Fusarium asiaticum.